Reading from the N-terminus, the 170-residue chain is Inner membrane protein p22 (170 aa).

At 1–3 (MST) the chain is on the intravirion side. Residues 4 to 24 (LLIALIALIVLLIIILVVFLY) traverse the membrane as a helical segment. Topologically, residues 25–170 (YKKQQPPKKV…LYLPRNHKYA (146 aa)) are virion surface.

The protein belongs to the asfivirus inner membrane protein p22 family.

Its subcellular location is the virion membrane. The protein localises to the host cell membrane. The chain is Inner membrane protein p22 from Ornithodoros (relapsing fever ticks).